The following is a 520-amino-acid chain: ATP synthase subunit alpha 2 (520 aa).

G176–T183 is a binding site for ATP.

This sequence belongs to the ATPase alpha/beta chains family. As to quaternary structure, F-type ATPases have 2 components, CF(1) - the catalytic core - and CF(0) - the membrane proton channel. CF(1) has five subunits: alpha(3), beta(3), gamma(1), delta(1), epsilon(1). CF(0) has three main subunits: a(1), b(2) and c(9-12). The alpha and beta chains form an alternating ring which encloses part of the gamma chain. CF(1) is attached to CF(0) by a central stalk formed by the gamma and epsilon chains, while a peripheral stalk is formed by the delta and b chains.

It is found in the cell inner membrane. The enzyme catalyses ATP + H2O + 4 H(+)(in) = ADP + phosphate + 5 H(+)(out). Its function is as follows. Produces ATP from ADP in the presence of a proton gradient across the membrane. The alpha chain is a regulatory subunit. This Polaromonas naphthalenivorans (strain CJ2) protein is ATP synthase subunit alpha 2.